Reading from the N-terminus, the 330-residue chain is CRISPR-associated endonuclease Cas1 2 (330 aa).

Residues Glu-156, His-222, and Glu-237 each coordinate Mn(2+).

The protein belongs to the CRISPR-associated endonuclease Cas1 family. In terms of assembly, homodimer, forms a heterotetramer with a Cas2 homodimer. Requires Mg(2+) as cofactor. Mn(2+) serves as cofactor.

Functionally, CRISPR (clustered regularly interspaced short palindromic repeat), is an adaptive immune system that provides protection against mobile genetic elements (viruses, transposable elements and conjugative plasmids). CRISPR clusters contain spacers, sequences complementary to antecedent mobile elements, and target invading nucleic acids. CRISPR clusters are transcribed and processed into CRISPR RNA (crRNA). Acts as a dsDNA endonuclease. Involved in the integration of spacer DNA into the CRISPR cassette. This Thermodesulfovibrio yellowstonii (strain ATCC 51303 / DSM 11347 / YP87) protein is CRISPR-associated endonuclease Cas1 2.